The chain runs to 283 residues: 5'-nucleotidase SurE 2 (283 aa).

A divalent metal cation is bound by residues aspartate 19, aspartate 20, serine 52, and asparagine 110.

The protein belongs to the SurE nucleotidase family. A divalent metal cation serves as cofactor.

Its subcellular location is the cytoplasm. It carries out the reaction a ribonucleoside 5'-phosphate + H2O = a ribonucleoside + phosphate. Functionally, nucleotidase that shows phosphatase activity on nucleoside 5'-monophosphates. The protein is 5'-nucleotidase SurE 2 of Chlamydia caviae (strain ATCC VR-813 / DSM 19441 / 03DC25 / GPIC) (Chlamydophila caviae).